Here is a 300-residue protein sequence, read N- to C-terminus: Ribosomal RNA small subunit methyltransferase H (300 aa).

S-adenosyl-L-methionine contacts are provided by residues 46-48 (GGH), Asp65, Phe92, Asp107, and Gln114.

This sequence belongs to the methyltransferase superfamily. RsmH family.

The protein localises to the cytoplasm. It catalyses the reaction cytidine(1402) in 16S rRNA + S-adenosyl-L-methionine = N(4)-methylcytidine(1402) in 16S rRNA + S-adenosyl-L-homocysteine + H(+). Its function is as follows. Specifically methylates the N4 position of cytidine in position 1402 (C1402) of 16S rRNA. This chain is Ribosomal RNA small subunit methyltransferase H, found in Prochlorococcus marinus (strain AS9601).